The following is a 127-amino-acid chain: Competence protein ComGF (127 aa).

As to quaternary structure, the transformation pili are flexible filaments, consisting mainly of the major pilin ComGC and smaller amounts of the minor pilins, including at least ComGD, ComGF and ComGG. Interacts with ComGD. Interacts with ComGG.

The protein resides in the cell membrane. Its subcellular location is the fimbrium. Required for formation of the type IV-like pilus (T4P) that plays a role in transformation. Involved in transformation. Transformation pili are dynamically extended and retracted, perhaps thereby promoting DNA uptake and transformation. Required for transformation and DNA binding. The sequence is that of Competence protein ComGF (comGF) from Bacillus subtilis (strain 168).